Here is a 143-residue protein sequence, read N- to C-terminus: Nucleoside diphosphate kinase (143 aa).

ATP contacts are provided by K11, F59, R87, T93, R104, and N114. The active-site Pros-phosphohistidine intermediate is the H117.

Belongs to the NDK family. In terms of assembly, homotetramer. Mg(2+) is required as a cofactor.

It localises to the cytoplasm. The enzyme catalyses a 2'-deoxyribonucleoside 5'-diphosphate + ATP = a 2'-deoxyribonucleoside 5'-triphosphate + ADP. The catalysed reaction is a ribonucleoside 5'-diphosphate + ATP = a ribonucleoside 5'-triphosphate + ADP. In terms of biological role, major role in the synthesis of nucleoside triphosphates other than ATP. The ATP gamma phosphate is transferred to the NDP beta phosphate via a ping-pong mechanism, using a phosphorylated active-site intermediate. The sequence is that of Nucleoside diphosphate kinase from Tolumonas auensis (strain DSM 9187 / NBRC 110442 / TA 4).